The sequence spans 317 residues: Melanoma-associated antigen 4 (317 aa).

The span at 1–14 (MSSEQKSQHCKPEE) shows a compositional bias: basic and acidic residues. The interval 1–102 (MSSEQKSQHC…EEGPSTSPDA (102 aa)) is disordered. Residues 66 to 82 (PQGASALPTTISFTCWR) show a composition bias toward polar residues. The MAGE domain occupies 110–309 (LSNKVDELAH…IAYPSLREAA (200 aa)).

Expressed in many tumors of several types, such as melanoma, head and neck squamous cell carcinoma, lung carcinoma and breast carcinoma, but not in normal tissues except for testes and placenta.

In terms of biological role, regulates cell proliferation through the inhibition of cell cycle arrest at the G1 phase. Also negatively regulates p53-mediated apoptosis. In Homo sapiens (Human), this protein is Melanoma-associated antigen 4 (MAGEA4).